Consider the following 188-residue polypeptide: uncharacterized protein (188 aa).

Its subcellular location is the plastid. The protein localises to the cyanelle. This is an uncharacterized protein from Cyanophora paradoxa.